Here is a 740-residue protein sequence, read N- to C-terminus: Probable apyrase 7 (740 aa).

At 1–113 the chain is on the cytoplasmic side; that stretch reads MVFGRITELF…PSTRRKLIRA (113 aa). Residues 114–134 traverse the membrane as a helical segment; it reads VMIVMCLFLFAFLVYIVSMYI. Residues 135-581 lie on the Extracellular side of the membrane; the sequence is YTNWSRGASR…LKSYETLSMK (447 aa). Residue N137 is glycosylated (N-linked (GlcNAc...) asparagine). 147-157 contacts ATP; sequence VVFDCGSTGTR. The N-linked (GlcNAc...) asparagine glycan is linked to N208. E284 functions as the Proton acceptor in the catalytic mechanism. An ATP-binding site is contributed by 309-319; the sequence is GALDLGGSSLQ. 4 N-linked (GlcNAc...) asparagine glycosylation sites follow: N330, N374, N439, and N484. A helical transmembrane segment spans residues 582-602; it reads INPIALISILILSLLLLLCAL. The Cytoplasmic segment spans residues 603 to 740; the sequence is SRVSNCLPRF…SLADSHMLKM (138 aa). The segment at 706 to 740 is disordered; it reads FWSSPRRSQMRLQSRRSQSREDLSSSLADSHMLKM. Positions 708–721 are enriched in low complexity; it reads SSPRRSQMRLQSRR.

Belongs to the GDA1/CD39 NTPase family. It depends on Ca(2+) as a cofactor. In terms of tissue distribution, detected in mature pollen grains. Also expressed in more diverse tissues such as roots, leaves, stems, pistils and sepals. More particularly expressed in the vascular bundle.

It is found in the membrane. The enzyme catalyses a ribonucleoside 5'-triphosphate + 2 H2O = a ribonucleoside 5'-phosphate + 2 phosphate + 2 H(+). Its function is as follows. Catalyzes the hydrolysis of phosphoanhydride bonds of nucleoside tri- and di-phosphates. Involved in the regulation of pollen and anther development. The protein is Probable apyrase 7 (APY7) of Arabidopsis thaliana (Mouse-ear cress).